A 237-amino-acid polypeptide reads, in one-letter code: Ribonuclease PH (237 aa).

Phosphate is bound by residues Arg86 and Gly124–Arg126.

The protein belongs to the RNase PH family. Homohexameric ring arranged as a trimer of dimers.

It carries out the reaction tRNA(n+1) + phosphate = tRNA(n) + a ribonucleoside 5'-diphosphate. Phosphorolytic 3'-5' exoribonuclease that plays an important role in tRNA 3'-end maturation. Removes nucleotide residues following the 3'-CCA terminus of tRNAs; can also add nucleotides to the ends of RNA molecules by using nucleoside diphosphates as substrates, but this may not be physiologically important. Probably plays a role in initiation of 16S rRNA degradation (leading to ribosome degradation) during starvation. This is Ribonuclease PH from Idiomarina loihiensis (strain ATCC BAA-735 / DSM 15497 / L2-TR).